The chain runs to 122 residues: Large ribosomal subunit protein uL18 (122 aa).

The span at 1–22 shows a compositional bias: basic residues; that stretch reads MDKNKKLQSKRLRRRRHVRNKL. Positions 1-25 are disordered; that stretch reads MDKNKKLQSKRLRRRRHVRNKLRGS.

This sequence belongs to the universal ribosomal protein uL18 family. In terms of assembly, part of the 50S ribosomal subunit; part of the 5S rRNA/L5/L18/L25 subcomplex. Contacts the 5S and 23S rRNAs.

Functionally, this is one of the proteins that bind and probably mediate the attachment of the 5S RNA into the large ribosomal subunit, where it forms part of the central protuberance. The protein is Large ribosomal subunit protein uL18 of Rhodopirellula baltica (strain DSM 10527 / NCIMB 13988 / SH1).